Consider the following 295-residue polypeptide: G1/S-specific cyclin-D1 (295 aa).

Positions 28 to 152 (LRAMLKAEET…VLVNKLKWNL (125 aa)) constitute a Cyclin N-terminal domain. Positions 264-295 (QQNLDPKAAEEEEEEEEVDLACTPTDVRDVNI) are disordered. A Glycyl lysine isopeptide (Lys-Gly) (interchain with G-Cter in ubiquitin) cross-link involves residue lysine 270. Residues 273 to 282 (EEEEEEEEVD) are compositionally biased toward acidic residues. Position 286 is a phosphothreonine (threonine 286).

The protein belongs to the cyclin family. Cyclin D subfamily. Interacts with either CDK4 or CDK6 protein kinase to form a serine/threonine kinase holoenzyme complex. The cyclin subunit imparts substrate specificity to the complex. Component of the ternary complex CCND1/CDK4/CDKN1B required for nuclear translocation and modulation of CDK4-mediated kinase activity. Interacts directly with CDKN1B. Can form similar complexes with either CDKN1A or CDKN2A. Interacts with UHRF2; the interaction ubiquitinates CCND1 and appears to occur independently of phosphorylation. Interacts with USP2. Interacts (via cyclin N-terminal domain) with INSM1 (via N-terminal region); the interaction competes with the binding of CCND1 to CDK4 during cell cycle progression and inhibits CDK4 activity. Interacts with CDK4; the interaction is prevented with the binding of CCND1 to INSM1 during cell cycle progression. Phosphorylation at Thr-286 by MAP kinases is required for ubiquitination and degradation by the DCX(AMBRA1) complex. It also plays an essential role for recognition by the FBXO31 component of SCF (SKP1-cullin-F-box) protein ligase complex following DNA damage. Post-translationally, ubiquitinated at Lys-270 by the DCX(AMBRA1) complex during the transition from G1 to S cell phase, leading to its degradation: ubiquitination is dependent on Thr-286 phosphorylation. The DCX(AMBRA1) complex represents the major regulator of CCND1 stability during the G1/S transition. Also ubiquitinated by the SCF(FBXO4) and Cul7-RING(FBXW8) ubiquitin-protein ligase complexes. Following DNA damage it is ubiquitinated by the SCF(FBXO31) protein ligase complex. SCF(FBXO31) ubiquitination is dependent on Thr-286 phosphorylation. Ubiquitinated also by UHRF2 apparently in a phosphorylation-independent manner. Ubiquitination leads to its degradation and G1 arrest. Deubiquitinated by USP2; leading to its stabilization.

The protein localises to the nucleus. Its subcellular location is the cytoplasm. The protein resides in the nucleus membrane. Its function is as follows. Regulatory component of the cyclin D1-CDK4 (DC) complex that phosphorylates and inhibits members of the retinoblastoma (RB) protein family including RB1 and regulates the cell-cycle during G(1)/S transition. Phosphorylation of RB1 allows dissociation of the transcription factor E2F from the RB/E2F complex and the subsequent transcription of E2F target genes which are responsible for the progression through the G(1) phase. Hypophosphorylates RB1 in early G(1) phase. Cyclin D-CDK4 complexes are major integrators of various mitogenenic and antimitogenic signals. Also a substrate for SMAD3, phosphorylating SMAD3 in a cell-cycle-dependent manner and repressing its transcriptional activity. Component of the ternary complex, cyclin D1/CDK4/CDKN1B, required for nuclear translocation and activity of the cyclin D-CDK4 complex. Exhibits transcriptional corepressor activity with INSM1 on the NEUROD1 and INS promoters in a cell cycle-independent manner. The chain is G1/S-specific cyclin-D1 (CCND1) from Bos taurus (Bovine).